The sequence spans 219 residues: Ras-related protein Rab-3B (219 aa).

Position 2 is an N-acetylalanine (alanine 2). 9 residues coordinate GTP: serine 31, serine 32, valine 33, glycine 34, lysine 35, threonine 36, serine 37, proline 49, and serine 53. Threonine 36 contributes to the Mg(2+) binding site. The Switch 1 motif lies at 45 to 58 (DTFTPAFVSTVGID). Mg(2+)-binding residues include threonine 54 and aspartate 77. Residues 78–96 (TAGQERYRTITTAYYRGAM) carry the Switch 2 motif. Glycine 80 contributes to the GTP binding site. Threonine 86 is modified (phosphothreonine; by LRRK2). Residues asparagine 135, lysine 136, aspartate 138, alanine 166, and lysine 167 each coordinate GTP. 2 positions are modified to phosphoserine: serine 188 and serine 190. S-geranylgeranyl cysteine attachment occurs at residues cysteine 217 and cysteine 219. Cysteine 219 carries the post-translational modification Cysteine methyl ester.

Belongs to the small GTPase superfamily. Rab family. In terms of assembly, interacts with RIMS1, RIMS2, RPH3A and RPH3AL. The GTP-bound form interacts with GAS8/DRC4 (via coiled-coil domains). Interacts with GDI2, CHM and CHML; phosphorylation at Thr-86 disrupts these interactions. Interacts with MADD (via uDENN domain); the GTP-bound form is preferred for interaction. Mg(2+) serves as cofactor. Post-translationally, phosphorylation of Thr-86 in the switch II region by LRRK2 prevents the association of RAB regulatory proteins, including CHM, CHML and RAB GDP dissociation inhibitor GDI2. As to expression, abundantly expressed in testis, lung and brain.

It is found in the cell membrane. Its subcellular location is the golgi apparatus. The catalysed reaction is GTP + H2O = GDP + phosphate + H(+). Regulated by guanine nucleotide exchange factors (GEFs) which promote the exchange of bound GDP for free GTP. Regulated by GTPase activating proteins (GAPs) which increase the GTP hydrolysis activity. Inhibited by GDP dissociation inhibitors (GDIs) which prevent Rab-GDP dissociation. In terms of biological role, the small GTPases Rab are key regulators of intracellular membrane trafficking, from the formation of transport vesicles to their fusion with membranes. Rabs cycle between an inactive GDP-bound form and an active GTP-bound form that is able to recruit to membranes different sets of downstream effectors directly responsible for vesicle formation, movement, tethering and fusion. This Mus musculus (Mouse) protein is Ras-related protein Rab-3B.